A 118-amino-acid polypeptide reads, in one-letter code: 5-hydroxyisourate hydrolase (118 aa).

The substrate site is built by histidine 11, arginine 51, and tyrosine 115.

This sequence belongs to the transthyretin family. 5-hydroxyisourate hydrolase subfamily. As to quaternary structure, homotetramer.

Its subcellular location is the peroxisome. It catalyses the reaction 5-hydroxyisourate + H2O = 5-hydroxy-2-oxo-4-ureido-2,5-dihydro-1H-imidazole-5-carboxylate + H(+). The protein operates within purine metabolism; urate degradation; (S)-allantoin from urate: step 2/3. Functionally, catalyzes the hydrolysis of 5-hydroxyisourate (HIU) to 2-oxo-4-hydroxy-4-carboxy-5-ureidoimidazoline (OHCU). The polypeptide is 5-hydroxyisourate hydrolase (Urah) (Mus musculus (Mouse)).